A 112-amino-acid polypeptide reads, in one-letter code: Cell cycle protein GpsB (112 aa).

Residues 38–72 (IKDYEAFHKEFEQLKQQNARLKRELEEQKLAATQV) are a coiled coil.

This sequence belongs to the GpsB family. As to quaternary structure, forms polymers through the coiled coil domains. Interacts with PBP1, MreC and EzrA.

It localises to the cytoplasm. Divisome component that associates with the complex late in its assembly, after the Z-ring is formed, and is dependent on DivIC and PBP2B for its recruitment to the divisome. Together with EzrA, is a key component of the system that regulates PBP1 localization during cell cycle progression. Its main role could be the removal of PBP1 from the cell pole after pole maturation is completed. Also contributes to the recruitment of PBP1 to the division complex. Not essential for septum formation. This is Cell cycle protein GpsB from Bacillus anthracis (strain A0248).